Reading from the N-terminus, the 177-residue chain is Large ribosomal subunit protein uL6 (177 aa).

Positions 151-177 (KRPPEPYKGKGVKYADEHIRRKEGKKS) are disordered. Residues 152–177 (RPPEPYKGKGVKYADEHIRRKEGKKS) are compositionally biased toward basic and acidic residues.

Belongs to the universal ribosomal protein uL6 family. In terms of assembly, part of the 50S ribosomal subunit.

This protein binds to the 23S rRNA, and is important in its secondary structure. It is located near the subunit interface in the base of the L7/L12 stalk, and near the tRNA binding site of the peptidyltransferase center. The chain is Large ribosomal subunit protein uL6 from Fusobacterium nucleatum subsp. nucleatum (strain ATCC 25586 / DSM 15643 / BCRC 10681 / CIP 101130 / JCM 8532 / KCTC 2640 / LMG 13131 / VPI 4355).